Consider the following 122-residue polypeptide: Small ribosomal subunit protein uS13 (122 aa).

The segment at 95 to 122 is disordered; the sequence is GLPVHGQRTHTNARTRKGPRKGAVGKKK.

This sequence belongs to the universal ribosomal protein uS13 family. In terms of assembly, part of the 30S ribosomal subunit. Forms a loose heterodimer with protein S19. Forms two bridges to the 50S subunit in the 70S ribosome.

Located at the top of the head of the 30S subunit, it contacts several helices of the 16S rRNA. In the 70S ribosome it contacts the 23S rRNA (bridge B1a) and protein L5 of the 50S subunit (bridge B1b), connecting the 2 subunits; these bridges are implicated in subunit movement. Contacts the tRNAs in the A and P-sites. This Lawsonia intracellularis (strain PHE/MN1-00) protein is Small ribosomal subunit protein uS13.